Consider the following 290-residue polypeptide: ATP synthase gamma chain (290 aa).

Belongs to the ATPase gamma chain family. F-type ATPases have 2 components, CF(1) - the catalytic core - and CF(0) - the membrane proton channel. CF(1) has five subunits: alpha(3), beta(3), gamma(1), delta(1), epsilon(1). CF(0) has three main subunits: a, b and c.

Its subcellular location is the cell membrane. Functionally, produces ATP from ADP in the presence of a proton gradient across the membrane. The gamma chain is believed to be important in regulating ATPase activity and the flow of protons through the CF(0) complex. This chain is ATP synthase gamma chain, found in Chloroflexus aurantiacus (strain ATCC 29366 / DSM 635 / J-10-fl).